Here is an 86-residue protein sequence, read N- to C-terminus: Putative membrane protein insertion efficiency factor (86 aa).

Positions 66 to 86 (PLHEGGDDPVPPRKNDDNREN) are disordered.

It belongs to the UPF0161 family.

The protein localises to the cell inner membrane. Could be involved in insertion of integral membrane proteins into the membrane. This is Putative membrane protein insertion efficiency factor from Proteus mirabilis (strain HI4320).